The sequence spans 557 residues: Vacuolar protein sorting-associated protein 30 (557 aa).

2 disordered regions span residues 93 to 149 (DDDN…ENQQ) and 218 to 238 (NKEI…SEKE). Residues 135–147 (DEEEQEATDEDEN) are compositionally biased toward acidic residues. T142 is modified (phosphothreonine). Residues 189–322 (LINRLKSEYD…QLDKLRKINI (134 aa)) adopt a coiled-coil conformation. The BARA stretch occupies residues 320 to 539 (INIFNATFKI…LAFSSNLLSK (220 aa)). A required for membrane-association, autophagic function during starvation and normal autophagosome morphology region spans residues 515–540 (WTTAMKFLLTNVKWLLAFSSNLLSKS).

The protein belongs to the beclin family. As to quaternary structure, component of the autophagy-specific VPS34 PI3-kinase complex I composed of VPS15, VPS30, VPS34, ATG14 and ATG38; and of the VPS34 PI3-kinase complex II composed of VPS15, VPS30, VPS34 and VPS38.

It localises to the endosome membrane. The protein localises to the vacuole membrane. The protein resides in the preautophagosomal structure membrane. Required for cytoplasm to vacuole transport (Cvt), autophagy, nucleophagy, and mitophagy, as a part of the autophagy-specific VPS34 PI3-kinase complex I. This complex is essential to recruit the ATG8-phosphatidylinositol conjugate and the ATG12-ATG5 conjugate to the pre-autophagosomal structure. Also involved in endosome-to-Golgi retrograde transport as part of the VPS34 PI3-kinase complex II. This second complex is required for the endosome-to-Golgi retrieval of PEP1 and KEX2, and the recruitment of VPS5 and VPS7, two components of the retromer complex, to endosomal membranes (probably through the synthesis of a specific pool of phosphatidylinositol 3-phosphate recruiting the retromer to the endosomes). Also plays a role in regulation of filamentous growth. This chain is Vacuolar protein sorting-associated protein 30, found in Saccharomyces cerevisiae (strain ATCC 204508 / S288c) (Baker's yeast).